Here is a 338-residue protein sequence, read N- to C-terminus: 1-aminocyclopropane-1-carboxylate deaminase (338 aa).

Position 51 is an N6-(pyridoxal phosphate)lysine (lysine 51). The active-site Nucleophile is the serine 78.

It belongs to the ACC deaminase/D-cysteine desulfhydrase family. In terms of assembly, homotrimer. The cofactor is pyridoxal 5'-phosphate.

It catalyses the reaction 1-aminocyclopropane-1-carboxylate + H2O = 2-oxobutanoate + NH4(+). Its function is as follows. Catalyzes a cyclopropane ring-opening reaction, the irreversible conversion of 1-aminocyclopropane-1-carboxylate (ACC) to ammonia and alpha-ketobutyrate. Allows growth on ACC as a nitrogen source. The polypeptide is 1-aminocyclopropane-1-carboxylate deaminase (Pseudomonas fluorescens).